We begin with the raw amino-acid sequence, 306 residues long: Elongation factor Ts (306 aa).

Residues 80–83 (TDFV) form an involved in Mg(2+) ion dislocation from EF-Tu region.

The protein belongs to the EF-Ts family.

It is found in the cytoplasm. In terms of biological role, associates with the EF-Tu.GDP complex and induces the exchange of GDP to GTP. It remains bound to the aminoacyl-tRNA.EF-Tu.GTP complex up to the GTP hydrolysis stage on the ribosome. The chain is Elongation factor Ts from Clostridium novyi (strain NT).